The following is a 131-amino-acid chain: Small ribosomal subunit protein uS8 (131 aa).

This sequence belongs to the universal ribosomal protein uS8 family. Part of the 30S ribosomal subunit. Contacts proteins S5 and S12.

In terms of biological role, one of the primary rRNA binding proteins, it binds directly to 16S rRNA central domain where it helps coordinate assembly of the platform of the 30S subunit. The polypeptide is Small ribosomal subunit protein uS8 (Mesomycoplasma hyopneumoniae (strain 7448) (Mycoplasma hyopneumoniae)).